Reading from the N-terminus, the 214-residue chain is Reticulon-3-B (214 aa).

A disordered region spans residues Met-1–Ser-22. Positions Val-26 to Glu-214 constitute a Reticulon domain. 2 helical membrane-spanning segments follow: residues Met-46–Leu-66 and Thr-150–Phe-170.

In terms of assembly, homodimer.

Its subcellular location is the endoplasmic reticulum membrane. The protein localises to the golgi apparatus membrane. May be involved in membrane trafficking in the early secretory pathway. This chain is Reticulon-3-B (rtn3-b), found in Xenopus laevis (African clawed frog).